The sequence spans 2036 residues: Bikaverin polyketide synthase bik1 (2036 aa).

The segment at 8–242 is N-terminal acylcarrier protein transacylase domain (SAT); sequence YVFGDQSTPV…YPAPIYGPYH (235 aa). The region spanning 370–801 is the Ketosynthase family 3 (KS3) domain; the sequence is ENKIAIIGFS…GGNTSLLLED (432 aa). Active-site for beta-ketoacyl synthase activity residues include Cys541, His676, and His718. The interval 908–1209 is acyl/malonyl transferases; it reads FLFTGQGAQE…LASLRRKEDH (302 aa). The active-site For acyl/malonyl transferase activity is Ser997. Residues 1293–1425 form an N-terminal hotdog fold region; that stretch reads HNVIEQVHGD…CDVAVENPSS (133 aa). One can recognise a PKS/mFAS DH domain in the interval 1293–1600; that stretch reads HNVIEQVHGD…FKKVARKVLE (308 aa). Residues 1295–1599 form a product template (PT) domain region; sequence VIEQVHGDKR…TFKKVARKVL (305 aa). Catalysis depends on His1325, which acts as the Proton acceptor; for dehydratase activity. Residues 1452 to 1600 are C-terminal hotdog fold; it reads SAHMMRRGLL…FKKVARKVLE (149 aa). Residue Asp1511 is the Proton donor; for dehydratase activity of the active site. The disordered stretch occupies residues 1628 to 1654; that stretch reads VLTPPSTTSHSVGTTSPPEPTESPVGS. The span at 1638–1654 shows a compositional bias: low complexity; that stretch reads SVGTTSPPEPTESPVGS. One can recognise a Carrier domain in the interval 1653–1730; that stretch reads GSASGLIQKA…DLKSFLGAND (78 aa). Ser1690 is modified (O-(pantetheine 4'-phosphoryl)serine). A disordered region spans residues 1733–1758; it reads FSSSNSEAESSASSAASTSPSDHGDD. Over residues 1734 to 1753 the composition is skewed to low complexity; it reads SSSNSEAESSASSAASTSPS. Ser1857 serves as the catalytic For thioesterase activity.

It functions in the pathway secondary metabolite biosynthesis. Polyketide synthase; part of the gene cluster that mediates the biosynthesis of bikaverin, a red pigment also considered as a mycotoxin. The first stage is catalyzed by the polyketide synthase bik1, which catalyzes the formation of the intermediate SMA76a also knowm as pre-bikaverin. FAD-dependent monooxygenase bik2 might then be responsible for the oxidation of pre-bikaverin to oxo-pre-bikaverin which is in turn methylated by the O-methyltransferase bik3 to me-oxo-pre-bikaverin. A further cycle of oxydation and methylation by bik2 and bik3 leads to the final product of bikaverin, via a nor-bikaverin intermediate. This is Bikaverin polyketide synthase bik1 from Gibberella fujikuroi (strain CBS 195.34 / IMI 58289 / NRRL A-6831) (Bakanae and foot rot disease fungus).